The following is a 575-amino-acid chain: Putative export ATP-binding/permease protein RBE_0492 (575 aa).

The region spanning 20 to 303 (LIIVIISLLS…IFELLSEMHL (284 aa)) is the ABC transmembrane type-1 domain. 6 consecutive transmembrane segments (helical) span residues 21–41 (IIVI…GNVF), 61–81 (ILYI…RSYF), 135–155 (FLSF…LMFF), 158–178 (FKLA…IIKF), 242–262 (ALFF…VIWI), and 277–297 (IISF…IFEL). The region spanning 336 to 571 (LEFKNVNFSY…SDLYRTIYKE (236 aa)) is the ABC transporter domain. Position 371–378 (371–378 (GRSGSGKS)) interacts with ATP.

This sequence belongs to the ABC transporter superfamily. Homodimer.

Its subcellular location is the cell inner membrane. In terms of biological role, part of an ABC transporter complex. Transmembrane domains (TMD) form a pore in the inner membrane and the ATP-binding domain (NBD) is responsible for energy generation. This is Putative export ATP-binding/permease protein RBE_0492 from Rickettsia bellii (strain RML369-C).